A 359-amino-acid polypeptide reads, in one-letter code: 3-isopropylmalate dehydrogenase (359 aa).

The substrate site is built by Arg96, Arg106, Arg134, and Asp223. Residues Asp223, Asp247, and Asp251 each contribute to the Mg(2+) site. An NAD(+)-binding site is contributed by 281 to 293 (GSAPDIAGQGIAN).

The protein belongs to the isocitrate and isopropylmalate dehydrogenases family. LeuB type 1 subfamily. In terms of assembly, homodimer. Mg(2+) is required as a cofactor. It depends on Mn(2+) as a cofactor.

Its subcellular location is the cytoplasm. It catalyses the reaction (2R,3S)-3-isopropylmalate + NAD(+) = 4-methyl-2-oxopentanoate + CO2 + NADH. Its pathway is amino-acid biosynthesis; L-leucine biosynthesis; L-leucine from 3-methyl-2-oxobutanoate: step 3/4. In terms of biological role, catalyzes the oxidation of 3-carboxy-2-hydroxy-4-methylpentanoate (3-isopropylmalate) to 3-carboxy-4-methyl-2-oxopentanoate. The product decarboxylates to 4-methyl-2 oxopentanoate. The polypeptide is 3-isopropylmalate dehydrogenase (Chromohalobacter salexigens (strain ATCC BAA-138 / DSM 3043 / CIP 106854 / NCIMB 13768 / 1H11)).